We begin with the raw amino-acid sequence, 664 residues long: Protein SIEVE ELEMENT OCCLUSION C (664 aa).

The chain is Protein SIEVE ELEMENT OCCLUSION C from Arabidopsis thaliana (Mouse-ear cress).